The sequence spans 232 residues: Large ribosomal subunit protein uL1 (232 aa).

This sequence belongs to the universal ribosomal protein uL1 family. As to quaternary structure, part of the 50S ribosomal subunit.

Binds directly to 23S rRNA. The L1 stalk is quite mobile in the ribosome, and is involved in E site tRNA release. In terms of biological role, protein L1 is also a translational repressor protein, it controls the translation of the L11 operon by binding to its mRNA. The chain is Large ribosomal subunit protein uL1 from Paraburkholderia phymatum (strain DSM 17167 / CIP 108236 / LMG 21445 / STM815) (Burkholderia phymatum).